Consider the following 527-residue polypeptide: Peptide chain release factor 3 (527 aa).

A tr-type G domain is found at 9 to 277; it reads AKRRTFAIIS…AVVDWAPLPL (269 aa). GTP is bound by residues 18-25, 86-90, and 140-143; these read SHPDAGKT, DTPGH, and NKLD.

The protein belongs to the TRAFAC class translation factor GTPase superfamily. Classic translation factor GTPase family. PrfC subfamily.

It localises to the cytoplasm. Its function is as follows. Increases the formation of ribosomal termination complexes and stimulates activities of RF-1 and RF-2. It binds guanine nucleotides and has strong preference for UGA stop codons. It may interact directly with the ribosome. The stimulation of RF-1 and RF-2 is significantly reduced by GTP and GDP, but not by GMP. The sequence is that of Peptide chain release factor 3 from Pseudomonas fluorescens (strain ATCC BAA-477 / NRRL B-23932 / Pf-5).